The following is a 584-amino-acid chain: Alpha-glucosidase MAL12 (584 aa).

The Nucleophile role is filled by D214. Residue E276 is the Proton donor of the active site.

The protein belongs to the glycosyl hydrolase 13 family.

The catalysed reaction is Hydrolysis of terminal, non-reducing (1-&gt;4)-linked alpha-D-glucose residues with release of alpha-D-glucose.. This chain is Alpha-glucosidase MAL12 (MAL12), found in Saccharomyces cerevisiae (strain ATCC 204508 / S288c) (Baker's yeast).